A 437-amino-acid chain; its full sequence is Probable indole-3-pyruvate monooxygenase YUCCA3 (437 aa).

Residue 41–46 (GAGPSG) participates in FAD binding. 212–217 (GCGNSG) contacts NADP(+).

Belongs to the FMO family. FAD serves as cofactor.

The enzyme catalyses indole-3-pyruvate + NADPH + O2 + H(+) = (indol-3-yl)acetate + CO2 + NADP(+) + H2O. It participates in plant hormone metabolism; auxin biosynthesis. Its function is as follows. Involved in auxin biosynthesis. Belongs to the set of redundant YUCCA genes probably responsible for auxin biosynthesis in roots. This Arabidopsis thaliana (Mouse-ear cress) protein is Probable indole-3-pyruvate monooxygenase YUCCA3 (YUC3).